Consider the following 264-residue polypeptide: ATP synthase subunit a (264 aa).

6 helical membrane-spanning segments follow: residues 29–49, 89–109, 134–154, 177–197, 208–228, and 235–255; these read TWHI…LWLF, VIAP…FMDM, DLNI…YYSI, IPVN…SLAL, LIFI…ALGV, and LIFH…LTIV.

This sequence belongs to the ATPase A chain family. As to quaternary structure, F-type ATPases have 2 components, CF(1) - the catalytic core - and CF(0) - the membrane proton channel. CF(1) has five subunits: alpha(3), beta(3), gamma(1), delta(1), epsilon(1). CF(0) has three main subunits: a(1), b(2) and c(9-12). The alpha and beta chains form an alternating ring which encloses part of the gamma chain. CF(1) is attached to CF(0) by a central stalk formed by the gamma and epsilon chains, while a peripheral stalk is formed by the delta and b chains.

Its subcellular location is the cell inner membrane. Key component of the proton channel; it plays a direct role in the translocation of protons across the membrane. In Shewanella sediminis (strain HAW-EB3), this protein is ATP synthase subunit a.